The chain runs to 336 residues: Malate dehydrogenase, cytoplasmic (336 aa).

NAD(+)-binding positions include 11–17 and D42; that span reads GAAGQIG. Substrate-binding residues include R92 and R98. NAD(+) is bound by residues N105, Q112, and 129 to 131; that span reads VGN. Residues N131 and R163 each contribute to the substrate site. Residue H188 is the Proton acceptor of the active site.

This sequence belongs to the LDH/MDH superfamily. MDH type 2 family. In terms of assembly, homodimer.

The protein resides in the cytoplasm. The enzyme catalyses (S)-malate + NAD(+) = oxaloacetate + NADH + H(+). Its function is as follows. Catalyzes the reversible conversion of (S)-malate to oxaloacetate in the cytoplasm where oxaloacetate is used for gluconeogenesis. This is Malate dehydrogenase, cytoplasmic from Caenorhabditis elegans.